We begin with the raw amino-acid sequence, 280 residues long: Pantothenate synthetase (280 aa).

30–37 (MGYLHEGH) is a binding site for ATP. The active-site Proton donor is H37. Residue Q61 participates in (R)-pantoate binding. Q61 contributes to the beta-alanine binding site. 147-150 (GQKD) is a binding site for ATP. Q153 contacts (R)-pantoate. ATP contacts are provided by residues V176 and 184–187 (MSSR).

This sequence belongs to the pantothenate synthetase family. Homodimer.

The protein resides in the cytoplasm. The catalysed reaction is (R)-pantoate + beta-alanine + ATP = (R)-pantothenate + AMP + diphosphate + H(+). It participates in cofactor biosynthesis; (R)-pantothenate biosynthesis; (R)-pantothenate from (R)-pantoate and beta-alanine: step 1/1. Its function is as follows. Catalyzes the condensation of pantoate with beta-alanine in an ATP-dependent reaction via a pantoyl-adenylate intermediate. The polypeptide is Pantothenate synthetase (Thermosipho melanesiensis (strain DSM 12029 / CIP 104789 / BI429)).